The following is an 805-amino-acid chain: Leucine--tRNA ligase (805 aa).

A 'HIGH' region motif is present at residues 39-50 (PYPSGKGLHVGH). Residues 583–587 (KMSKS) carry the 'KMSKS' region motif. Residue Lys586 participates in ATP binding.

The protein belongs to the class-I aminoacyl-tRNA synthetase family.

The protein resides in the cytoplasm. The catalysed reaction is tRNA(Leu) + L-leucine + ATP = L-leucyl-tRNA(Leu) + AMP + diphosphate. The polypeptide is Leucine--tRNA ligase (Mycoplasmoides gallisepticum (strain R(low / passage 15 / clone 2)) (Mycoplasma gallisepticum)).